The primary structure comprises 300 residues: Very-long-chain enoyl-CoA reductase (300 aa).

A helical membrane pass occupies residues 91–111 (SLVFICEYAGPLFVYPIFYFL). N-linked (GlcNAc...) asparagine glycosylation occurs at Asn-163. A helical transmembrane segment spans residues 191–211 (VYLGLGLWIIGEVFNYICHIQ). Asn-238 is a glycosylation site (N-linked (GlcNAc...) asparagine). The helical transmembrane segment at 243–263 (ILSWIGFSILTQTLTSWIFAL) threads the bilayer.

Belongs to the steroid 5-alpha reductase family.

The protein localises to the endoplasmic reticulum membrane. The enzyme catalyses a very-long-chain 2,3-saturated fatty acyl-CoA + NADP(+) = a very-long-chain (2E)-enoyl-CoA + NADPH + H(+). It participates in lipid metabolism; fatty acid biosynthesis. Functionally, catalyzes the last of the four reactions of the long-chain fatty acids elongation cycle. This endoplasmic reticulum-bound enzymatic process, allows the addition of 2 carbons to the chain of long- and very long-chain fatty acids/VLCFAs per cycle. This enzyme reduces the trans-2,3-enoyl-CoA fatty acid intermediate to an acyl-CoA that can be further elongated by entering a new cycle of elongation. Thereby, it participates in the production of VLCFAs of different chain lengths that are involved in multiple biological processes as precursors of membrane lipids and lipid mediators. The chain is Very-long-chain enoyl-CoA reductase (gpsn2) from Dictyostelium discoideum (Social amoeba).